A 236-amino-acid polypeptide reads, in one-letter code: Exosome complex component Rrp4 (236 aa).

In terms of domain architecture, S1 motif spans 64-133 (GDKVIGKVIE…EIKESWLTLK (70 aa)). The KH domain occupies 141 to 199 (EGGHMVLIHASRVPRVIGKGGGMVNMVKELTATRIIIGQNGLIWIDGPIEGVTMAIAAI).

The protein belongs to the RRP4 family. In terms of assembly, component of the archaeal exosome complex. Forms a trimer of Rrp4 and/or Csl4 subunits. The trimer associates with a hexameric ring-like arrangement composed of 3 Rrp41-Rrp42 heterodimers.

The protein resides in the cytoplasm. Functionally, non-catalytic component of the exosome, which is a complex involved in RNA degradation. Increases the RNA binding and the efficiency of RNA degradation. Confers strong poly(A) specificity to the exosome. The chain is Exosome complex component Rrp4 from Thermoplasma acidophilum (strain ATCC 25905 / DSM 1728 / JCM 9062 / NBRC 15155 / AMRC-C165).